We begin with the raw amino-acid sequence, 71 residues long: Small ribosomal subunit protein eS17 (71 aa).

The protein belongs to the eukaryotic ribosomal protein eS17 family.

In Pyrobaculum neutrophilum (strain DSM 2338 / JCM 9278 / NBRC 100436 / V24Sta) (Thermoproteus neutrophilus), this protein is Small ribosomal subunit protein eS17.